We begin with the raw amino-acid sequence, 322 residues long: MQLSNRAAAREAASRDVLAADLRCSLFASALQSYKRDSVLRPFPASYARHDCKDFEALLADTGRLPNLKELLQSSRDTDKQAWDLVSWILSSKILTIHSAKKAEFEKIQQLTGAPHTPVPTPDFLFEIEYFDPANSRFYETKGERDLIYAFHGSRLENFHSIIHNGLHCHLNKTSLFGEGTYLTSDLSLALIYSPHGHGWQHSLLGPILSCVAVCEVIDHPDVKCQIKKKDSKEIDRSRARIKHSEGGEIPPKYFVVTNNQLLRVKYLLVYSQKQPKRASSQLSWLSSHWFVIMMSLYLLLLLIVSVTNSSVFHHFWNRVKR.

The Cytoplasmic portion of the chain corresponds to Met1–Ser287. The 87-residue stretch at Asn5–Ser91 folds into the PARP alpha-helical domain. The region spanning Ile94 to Ala279 is the PARP catalytic domain. His152, Tyr182, and Tyr254 together coordinate NAD(+). The chain crosses the membrane as a helical span at residues Ser288–Thr308. The Lumenal portion of the chain corresponds to Asn309–Arg322.

Belongs to the ARTD/PARP family. Interacts with KPNB1. Auto-mono-ADP-ribosylated.

The protein localises to the endoplasmic reticulum membrane. It carries out the reaction L-aspartyl-[protein] + NAD(+) = 4-O-(ADP-D-ribosyl)-L-aspartyl-[protein] + nicotinamide. The enzyme catalyses L-lysyl-[protein] + NAD(+) = N(6)-(ADP-D-ribosyl)-L-lysyl-[protein] + nicotinamide + H(+). The catalysed reaction is L-glutamyl-[protein] + NAD(+) = 5-O-(ADP-D-ribosyl)-L-glutamyl-[protein] + nicotinamide. In absence of activation signal, PARP16 is autoinhibited by the PARP alpha-helical domain (also named HD region), which prevents effective NAD(+)-binding. Activity is highly stimulated by signals, which unfold the PARP alpha-helical domain, relieving autoinhibition. Intracellular mono-ADP-ribosyltransferase that plays a role in different processes, such as protein translation and unfolded protein response (UPR), through the mono-ADP-ribosylation of proteins involved in those processes. Acts as an inhibitor of protein translation by catalyzing mono-ADP-ribosylation of ribosomal subunits, such as RPL14 and RPS6, thereby inhibiting polysome assembly and mRNA loading. Mono-ADP-ribosylation of ribosomal subunits is promoted by NMNAT2. Involved in the unfolded protein response (UPR) by ADP-ribosylating and activating EIF2AK3 and ERN1, two important UPR effectors. May also mediate mono-ADP-ribosylation of karyopherin KPNB1 a nuclear import factor. May not modify proteins on arginine or cysteine residues compared to other mono-ADP-ribosyltransferases. In Mus musculus (Mouse), this protein is Protein mono-ADP-ribosyltransferase PARP16.